A 272-amino-acid chain; its full sequence is Cholesterol 25-hydroxylase (272 aa).

N5 is a glycosylation site (N-linked (GlcNAc...) asparagine). 3 consecutive transmembrane segments (helical) span residues 38-58, 84-104, and 121-141; these read FFPV…FVVL, LLPC…PVTL, and LLLL…EFFV. Positions 129-263 constitute a Fatty acid hydroxylase domain; it reads LFCLLLFDME…FTHWDKILGT (135 aa). Residues 142 to 146 carry the Histidine box-1 motif; that stretch reads WHLLH. Residues 157–161 carry the Histidine box-2 motif; the sequence is HKVHH. Residues N163 and N189 are each glycosylated (N-linked (GlcNAc...) asparagine). The Histidine box-3 motif lies at 238 to 244; that stretch reads HHDLHHS.

Belongs to the sterol desaturase family. The cofactor is Fe cation. N-glycosylated.

It is found in the endoplasmic reticulum membrane. It catalyses the reaction cholesterol + AH2 + O2 = 25-hydroxycholesterol + A + H2O. It carries out the reaction cholesterol + NADPH + O2 + H(+) = 25-hydroxycholesterol + NADP(+) + H2O. Catalyzes the formation of 25-hydroxycholesterol from cholesterol, leading to repress cholesterol biosynthetic enzymes. Plays a key role in cell positioning and movement in lymphoid tissues: 25-hydroxycholesterol is an intermediate in biosynthesis of 7-alpha,25-dihydroxycholesterol (7-alpha,25-OHC), an oxysterol that acts as a ligand for the G protein-coupled receptor GPR183/EBI2, a chemotactic receptor for a number of lymphoid cells. May play an important role in regulating lipid metabolism by synthesizing a corepressor that blocks sterol regulatory element binding protein (SREBP) processing. As an interferon-stimulated gene, has broad antiviral activities against a wide range of enveloped viruses, such as vesicular stomatitis virus (VSV) and SARS coronavirus-2 (SARS-CoV-2). Its product, 25-hydroxycholesterol, activates the ER-localized enzyme ACAT to induce internalization of accessible cholesterol on the plasma membrane and restricts SARS-CoV-2 S protein-mediated fusion which inhibits virus replication. In testis, production of 25-hydroxycholesterol by macrophages plays a role in Leydig cell differentiation. Required to restrain inflammation in macrophages: production of 25-hydroxycholesterol protects macrophages from cholesterol overload, thereby preventing mitochondrial DNA release and subsequent activation of the AIM2 inflammasome. The sequence is that of Cholesterol 25-hydroxylase from Homo sapiens (Human).